A 1220-amino-acid polypeptide reads, in one-letter code: Cullin-associated NEDD8-dissociated protein 1 (1220 aa).

12 HEAT repeats span residues 1–35 (MEEGILLKKYVESSDKDIRYMALSDLAARLNDANH), 42–79 (ESFPDTLDVLLQALSDASPEVQQEAVRCVAIISSKIPQ), 121–157 (FYTSTVFPSFLQILKQYNVAQEEFFAILCVVCDSLEI), 259–295 (ADYTNKILSLLKKEEAPDELTQKLLEVLGLLLEYQQV), 365–410 (LSRL…HVPR), 615–650 (IFLRRVLIILCKKLQEEPTRSAAARALCDIFMSVTD), 680–700 (TTAYLELLEVLLKVGQKYLAE), 701–737 (SLLEHILGLLIETLKRNTENTVAILKCLLIIPLSILL), 738–775 (KSKNLLIDTIISHLQSSTIHLNEESVCLLSRIIAVISK), 810–847 (FQSKAIVTSLNKSFMSPKSEVRIKVFTTLIFGQLDYGK), 850–887 (LPANEYFDTIASNLNSPNADVMKAAAIALGSLTSQSEK), and 1020–1057 (EVSQETLQVIISVIKNRRSCIADVYNELLQGLISKSSV).

This sequence belongs to the CAND family.

Its subcellular location is the nucleus. Its function is as follows. Key assembly factor of SCF (SKP1-CUL1-F-box protein) E3 ubiquitin ligase complexes that promotes the exchange of the substrate-recognition F-box subunit in SCF complexes, thereby playing a key role in the cellular repertoire of SCF complexes. Acts as a F-box protein exchange factor. The protein is Cullin-associated NEDD8-dissociated protein 1 (knd1) of Schizosaccharomyces pombe (strain 972 / ATCC 24843) (Fission yeast).